The primary structure comprises 427 residues: Glutamate-1-semialdehyde 2,1-aminomutase (427 aa).

Lys265 carries the post-translational modification N6-(pyridoxal phosphate)lysine.

This sequence belongs to the class-III pyridoxal-phosphate-dependent aminotransferase family. HemL subfamily. Homodimer. Requires pyridoxal 5'-phosphate as cofactor.

Its subcellular location is the cytoplasm. The catalysed reaction is (S)-4-amino-5-oxopentanoate = 5-aminolevulinate. Its pathway is porphyrin-containing compound metabolism; protoporphyrin-IX biosynthesis; 5-aminolevulinate from L-glutamyl-tRNA(Glu): step 2/2. The chain is Glutamate-1-semialdehyde 2,1-aminomutase from Pseudomonas putida (strain W619).